The following is a 345-amino-acid chain: Homeobox protein DBX1 (345 aa).

2 disordered regions span residues 55 to 103 and 241 to 345; these read PRGS…VSPA and KERE…ITVS. Positions 182–241 form a DNA-binding region, homeobox; sequence GMLRRAVFSDVQRKALEKMFQKQKYISKPDRKKLAAKLGLKDSQVKIWFQNRRMKWRNSK. The segment covering 300–309 has biased composition (basic and acidic residues); sequence DPRHLRDPRL. Acidic residues predominate over residues 330-345; it reads SDSEDDEEGEEEITVS.

It belongs to the H2.0 homeobox family.

It localises to the nucleus. In terms of biological role, could have a role in patterning the central nervous system during embryogenesis. Has a key role in regulating the distinct phenotypic features that distinguish two major classes of ventral interneurons, V0 and V1 neurons. Regulates the transcription factor profile, neurotransmitter phenotype, intraspinal migratory path and axonal trajectory of V0 neurons, features that differentiate them from an adjacent set of V1 neurons. In Bos taurus (Bovine), this protein is Homeobox protein DBX1 (DBX1).